We begin with the raw amino-acid sequence, 2089 residues long: Non-reducing polyketide synthase PKS16 (2089 aa).

The tract at residues 8–243 is N-terminal acylcarrier protein transacylase (SAT) domain (SAT); it reads VLFGDQTVDP…IKLPITAAFH (236 aa). The tract at residues 342-364 is disordered; the sequence is AGIEVSRSTEMQPRQEQRTKPRS. Residues 354-364 are compositionally biased toward basic and acidic residues; sequence PRQEQRTKPRS. The Ketosynthase family 3 (KS3) domain occupies 364–793; sequence SSDIAIIGYA…GGNTSLLIED (430 aa). Residues Cys-536, His-671, and His-710 each act as for beta-ketoacyl synthase activity in the active site. The malonyl-CoA:ACP transacylase (MAT) domain stretch occupies residues 891–1214; the sequence is VFLFTGQGSQ…SIANAYNSGV (324 aa). The tract at residues 1273–1586 is product template (PT) domain; it reads TTCLQVIENE…KRTTLQSLLG (314 aa). The N-terminal hotdog fold stretch occupies residues 1276 to 1408; it reads LQVIENETFT…CTVMYGDGHQ (133 aa). The PKS/mFAS DH domain occupies 1276 to 1582; that stretch reads LQVIENETFT…FQQMKRTTLQ (307 aa). Residue His-1309 is the Proton acceptor; for dehydratase activity of the active site. Positions 1435–1582 are C-terminal hotdog fold; that stretch reads IHRMLKEMIY…FQQMKRTTLQ (148 aa). Asp-1495 (proton donor; for dehydratase activity) is an active-site residue. The 78-residue stretch at 1617–1694 folds into the Carrier 1 domain; the sequence is QSPVAGFSKV…ELRAFFLDKM (78 aa). The residue at position 1654 (Ser-1654) is an O-(pantetheine 4'-phosphoryl)serine. Residues 1697–1730 are disordered; that stretch reads PQATANDDDSDDSSDDEGPGFSRSQSNSTISTPE. The segment covering 1702 to 1714 has biased composition (acidic residues); sequence NDDDSDDSSDDEG. Residues 1718–1728 show a composition bias toward polar residues; sequence SRSQSNSTIST. The Carrier 2 domain occupies 1729 to 1806; sequence PEEPDVVNVL…DVQKALGAAP (78 aa). Ser-1766 carries the post-translational modification O-(pantetheine 4'-phosphoryl)serine. The interval 1848 to 2083 is thioesterase (TE) domain; sequence LFLLPDGAGS…VVGGNHFSIM (236 aa).

Its pathway is secondary metabolite biosynthesis. Its function is as follows. Non-reducing polyketide synthase; part of the gene cluster that mediates the biosynthesis of orcinol depsidone grayanic acid (GRA), the only major secondary metabolite known in C.grayi. The first step consists in the ring and depside synthesis by PKS16 leading to 4-O-demethylsphaerophorin, involving different orcinol-like rings, one with acetyl CoA and the other with octanoyl CoA as the starter. Further depsidone formation by the GRA cluster-specific cytochrome P450 leads to 4-O-demethylgrayanic acid. Finally, the cluster specific O-methyltransferase probably converts the 4-O-demethylgrayanic acid into grayanic acid. This is Non-reducing polyketide synthase PKS16 from Cladonia grayi (Gray's cup lichen).